The sequence spans 107 residues: Urease subunit beta (107 aa).

The protein belongs to the urease beta subunit family. In terms of assembly, heterotrimer of UreA (gamma), UreB (beta) and UreC (alpha) subunits. Three heterotrimers associate to form the active enzyme.

The protein resides in the cytoplasm. The catalysed reaction is urea + 2 H2O + H(+) = hydrogencarbonate + 2 NH4(+). Its pathway is nitrogen metabolism; urea degradation; CO(2) and NH(3) from urea (urease route): step 1/1. In Teredinibacter turnerae (strain ATCC 39867 / T7901), this protein is Urease subunit beta.